Reading from the N-terminus, the 654-residue chain is Peptide-N(4)-(N-acetyl-beta-glucosaminyl)asparagine amidase (654 aa).

Ala-2 is modified (N-acetylalanine). Positions 30 to 91 (EASKLLLTYA…EGETHLIFPK (62 aa)) constitute a PUB domain. The span at 112-123 (RLDGSNKSHKVE) shows a compositional bias: basic and acidic residues. The disordered stretch occupies residues 112-167 (RLDGSNKSHKVESSQQPAASTQLPTTPSSNPSGLNQHTRNRQGQSPDPPSASTVTP). Residues 124 to 167 (SSQQPAASTQLPTTPSSNPSGLNQHTRNRQGQSPDPPSASTVTP) show a composition bias toward polar residues. A Phosphothreonine modification is found at Thr-137. Residues Cys-250, Cys-253, Cys-283, and Cys-286 each contribute to the Zn(2+) site. The active-site Nucleophile is the Cys-309. Residues His-336 and Asp-353 contribute to the active site. Residues 454–654 (ELGGRISGSV…LEIIIKFSDL (201 aa)) form the PAW domain.

This sequence belongs to the transglutaminase-like superfamily. PNGase family. As to quaternary structure, component of a complex required to couple retrotranslocation, ubiquitination and deglycosylation composed of NGLY1, SAKS1, AMFR, VCP and RAD23B. Interacts with the proteasome components RAD23B and PSMC1. Interacts with directly with VCP. Interacts with DERL1, bringing it close to the endoplasmic reticulum membrane. Interacts with SAKS1. It depends on Zn(2+) as a cofactor.

Its subcellular location is the cytoplasm. It catalyses the reaction Hydrolysis of an N(4)-(acetyl-beta-D-glucosaminyl)asparagine residue in which the glucosamine residue may be further glycosylated, to yield a (substituted) N-acetyl-beta-D-glucosaminylamine and a peptide containing an aspartate residue.. Its activity is regulated as follows. Inhibited by Z-VAD-fmk, a well-known caspase inhibitor, which inhibits enzyme activity through covalent binding of the carbohydrate to the single Cys-306 residue. Specifically deglycosylates the denatured form of N-linked glycoproteins in the cytoplasm and assists their proteasome-mediated degradation. Cleaves the beta-aspartyl-glucosamine (GlcNAc) of the glycan and the amide side chain of Asn, converting Asn to Asp. Prefers proteins containing high-mannose over those bearing complex type oligosaccharides. Can recognize misfolded proteins in the endoplasmic reticulum that are exported to the cytosol to be destroyed and deglycosylate them, while it has no activity toward native proteins. Deglycosylation is a prerequisite for subsequent proteasome-mediated degradation of some, but not all, misfolded glycoproteins. The sequence is that of Peptide-N(4)-(N-acetyl-beta-glucosaminyl)asparagine amidase (NGLY1) from Macaca fascicularis (Crab-eating macaque).